The chain runs to 1015 residues: DExH-box ATP-dependent RNA helicase DExH8 (1015 aa).

In terms of domain architecture, Helicase ATP-binding spans 36–197 (IDKILENRVT…FKELGRGERV (162 aa)). 49–56 (GEPGCGKS) contributes to the ATP binding site. Residues 144 to 147 (DEVH) carry the DEVH box motif. Positions 254-419 (LIHDLILYIH…KLSLRQQVLH (166 aa)) constitute a Helicase C-terminal domain. 2 consecutive C3H1-type zinc fingers follow at residues 727 to 753 (YGEA…THTL) and 754 to 782 (QSTR…HAMR).

This sequence belongs to the DExH box helicase family.

The catalysed reaction is ATP + H2O = ADP + phosphate + H(+). The protein is DExH-box ATP-dependent RNA helicase DExH8 of Arabidopsis thaliana (Mouse-ear cress).